We begin with the raw amino-acid sequence, 81 residues long: ATP synthase subunit c, chloroplastic (81 aa).

The next 2 helical transmembrane spans lie at 3–23 (PLIS…ASIG) and 57–77 (LAFM…LLFA).

The protein belongs to the ATPase C chain family. As to quaternary structure, F-type ATPases have 2 components, F(1) - the catalytic core - and F(0) - the membrane proton channel. F(1) has five subunits: alpha(3), beta(3), gamma(1), delta(1), epsilon(1). F(0) has four main subunits: a(1), b(1), b'(1) and c(10-14). The alpha and beta chains form an alternating ring which encloses part of the gamma chain. F(1) is attached to F(0) by a central stalk formed by the gamma and epsilon chains, while a peripheral stalk is formed by the delta, b and b' chains.

It is found in the plastid. The protein resides in the chloroplast thylakoid membrane. F(1)F(0) ATP synthase produces ATP from ADP in the presence of a proton or sodium gradient. F-type ATPases consist of two structural domains, F(1) containing the extramembraneous catalytic core and F(0) containing the membrane proton channel, linked together by a central stalk and a peripheral stalk. During catalysis, ATP synthesis in the catalytic domain of F(1) is coupled via a rotary mechanism of the central stalk subunits to proton translocation. Functionally, key component of the F(0) channel; it plays a direct role in translocation across the membrane. A homomeric c-ring of between 10-14 subunits forms the central stalk rotor element with the F(1) delta and epsilon subunits. This Gossypium barbadense (Sea Island cotton) protein is ATP synthase subunit c, chloroplastic.